Consider the following 314-residue polypeptide: Small ribosomal subunit biogenesis GTPase RsgA (314 aa).

Residues 78 to 238 form the CP-type G domain; the sequence is SEIFREKLIA…IIDSPGFQEF (161 aa). GTP-binding positions include 127-130 and 180-188; these read NKID and GQSGVGKST. Residues cysteine 262, cysteine 267, histidine 269, and cysteine 275 each coordinate Zn(2+).

The protein belongs to the TRAFAC class YlqF/YawG GTPase family. RsgA subfamily. In terms of assembly, monomer. Associates with 30S ribosomal subunit, binds 16S rRNA. The cofactor is Zn(2+).

The protein resides in the cytoplasm. In terms of biological role, one of several proteins that assist in the late maturation steps of the functional core of the 30S ribosomal subunit. Helps release RbfA from mature subunits. May play a role in the assembly of ribosomal proteins into the subunit. Circularly permuted GTPase that catalyzes slow GTP hydrolysis, GTPase activity is stimulated by the 30S ribosomal subunit. This Nitrosomonas europaea (strain ATCC 19718 / CIP 103999 / KCTC 2705 / NBRC 14298) protein is Small ribosomal subunit biogenesis GTPase RsgA.